Here is a 559-residue protein sequence, read N- to C-terminus: ADP,ATP carrier protein 1 (559 aa).

The span at 1–10 (MNEVENNNHS) shows a compositional bias: polar residues. The disordered stretch occupies residues 1–22 (MNEVENNNHSFPREDIPTEDEI). An N-linked (GlcNAc...) asparagine glycan is attached at N8. The next 4 membrane-spanning stretches (helical) occupy residues 46–66 (FALL…MRIL), 79–99 (TILF…VFLI), 111–131 (IFSI…AVFL), and 174–194 (IVFI…FLSF). N196 carries an N-linked (GlcNAc...) asparagine glycan. A run of 2 helical transmembrane segments spans residues 210–230 (PLII…GAFF) and 242–262 (QVLL…VIFL). N-linked (GlcNAc...) asparagine glycosylation is present at N290. 3 consecutive transmembrane segments (helical) span residues 305–325 (LLLA…MVES), 354–373 (QYMT…SSYV), and 377–397 (GFLL…VLFL). N-linked (GlcNAc...) asparagine glycosylation occurs at N403. 3 helical membrane-spanning segments follow: residues 425–447 (YVLE…YSAF), 473–493 (IFGK…FEAL), and 503–523 (PITA…IIYL).

This sequence belongs to the ADP/ATP translocase tlc family.

It localises to the cell membrane. Its function is as follows. ATP transporter involved in the uptake of ATP from the host cell cytoplasm. Provides the microsporidian cell with host ATP in exchange for ADP. This is an obligate exchange system. This energy acquiring activity is an important component of microsporidian parasitism. In Encephalitozoon cuniculi (strain GB-M1) (Microsporidian parasite), this protein is ADP,ATP carrier protein 1 (NTT1).